Reading from the N-terminus, the 160-residue chain is SsrA-binding protein (160 aa).

The interval 131–160 is disordered; sequence KKEYDKRHTERERDSDRELQRAVRTKGKDD.

It belongs to the SmpB family.

The protein resides in the cytoplasm. Functionally, required for rescue of stalled ribosomes mediated by trans-translation. Binds to transfer-messenger RNA (tmRNA), required for stable association of tmRNA with ribosomes. tmRNA and SmpB together mimic tRNA shape, replacing the anticodon stem-loop with SmpB. tmRNA is encoded by the ssrA gene; the 2 termini fold to resemble tRNA(Ala) and it encodes a 'tag peptide', a short internal open reading frame. During trans-translation Ala-aminoacylated tmRNA acts like a tRNA, entering the A-site of stalled ribosomes, displacing the stalled mRNA. The ribosome then switches to translate the ORF on the tmRNA; the nascent peptide is terminated with the 'tag peptide' encoded by the tmRNA and targeted for degradation. The ribosome is freed to recommence translation, which seems to be the essential function of trans-translation. The protein is SsrA-binding protein of Pseudomonas syringae pv. tomato (strain ATCC BAA-871 / DC3000).